The primary structure comprises 494 residues: 3-octaprenyl-4-hydroxybenzoate carboxy-lyase (494 aa).

Residue Asn172 participates in Mn(2+) binding. Residues 175–177 (IYR), 189–191 (RWL), and 194–195 (RG) contribute to the prenylated FMN site. Residue Glu238 coordinates Mn(2+). Catalysis depends on Asp294, which acts as the Proton donor.

It belongs to the UbiD family. As to quaternary structure, homohexamer. Prenylated FMN serves as cofactor. Requires Mn(2+) as cofactor.

It is found in the cell membrane. The enzyme catalyses a 4-hydroxy-3-(all-trans-polyprenyl)benzoate + H(+) = a 2-(all-trans-polyprenyl)phenol + CO2. Its pathway is cofactor biosynthesis; ubiquinone biosynthesis. In terms of biological role, catalyzes the decarboxylation of 3-octaprenyl-4-hydroxy benzoate to 2-octaprenylphenol, an intermediate step in ubiquinone biosynthesis. In Albidiferax ferrireducens (strain ATCC BAA-621 / DSM 15236 / T118) (Rhodoferax ferrireducens), this protein is 3-octaprenyl-4-hydroxybenzoate carboxy-lyase.